We begin with the raw amino-acid sequence, 510 residues long: Ribonuclease Y (510 aa).

Residues 2 to 22 (IYIIFSSIFAGFILGFLVRVF) traverse the membrane as a helical segment. In terms of domain architecture, KH spans 198–258 (TVASVELPND…IRKELAKRTL (61 aa)). The HD domain occupies 324–419 (VLSHSKETAI…VQIADAISAS (96 aa)).

The protein belongs to the RNase Y family.

It is found in the cell membrane. Functionally, endoribonuclease that initiates mRNA decay. This chain is Ribonuclease Y, found in Borreliella burgdorferi (strain ATCC 35210 / DSM 4680 / CIP 102532 / B31) (Borrelia burgdorferi).